The primary structure comprises 346 residues: S-adenosylmethionine:tRNA ribosyltransferase-isomerase (346 aa).

This sequence belongs to the QueA family. Monomer.

It localises to the cytoplasm. The enzyme catalyses 7-aminomethyl-7-carbaguanosine(34) in tRNA + S-adenosyl-L-methionine = epoxyqueuosine(34) in tRNA + adenine + L-methionine + 2 H(+). It participates in tRNA modification; tRNA-queuosine biosynthesis. Its function is as follows. Transfers and isomerizes the ribose moiety from AdoMet to the 7-aminomethyl group of 7-deazaguanine (preQ1-tRNA) to give epoxyqueuosine (oQ-tRNA). This is S-adenosylmethionine:tRNA ribosyltransferase-isomerase from Neisseria gonorrhoeae (strain ATCC 700825 / FA 1090).